Here is a 689-residue protein sequence, read N- to C-terminus: Pentatricopeptide repeat-containing protein At1g71460, chloroplastic (689 aa).

Residues methionine 1–serine 49 constitute a chloroplast transit peptide. The tract at residues leucine 16–serine 68 is disordered. The segment covering serine 38–proline 52 has biased composition (low complexity). PPR repeat units lie at residues asparagine 75–valine 109, asparagine 110–serine 144, asparagine 145–serine 175, asparagine 176–leucine 212, asparagine 213–asparagine 247, serine 248–valine 282, tryptophan 283–glutamate 309, asparagine 315–glutamate 350, glutamine 351–arginine 381, asparagine 382–proline 416, aspartate 417–proline 451, asparagine 452–arginine 482, asparagine 483–proline 517, aspartate 518–serine 552, isoleucine 553–lysine 583, glycine 584–proline 618, asparagine 619–methionine 649, and serine 655–threonine 689.

The protein belongs to the PPR family. PCMP-A subfamily.

Its subcellular location is the plastid. The protein resides in the chloroplast. This is Pentatricopeptide repeat-containing protein At1g71460, chloroplastic (PCMP-A3) from Arabidopsis thaliana (Mouse-ear cress).